Consider the following 468-residue polypeptide: ATP synthase subunit beta 2 (468 aa).

An ATP-binding site is contributed by 145 to 152 (GGAGVGKT).

This sequence belongs to the ATPase alpha/beta chains family. As to quaternary structure, F-type ATPases have 2 components, CF(1) - the catalytic core - and CF(0) - the membrane proton channel. CF(1) has five subunits: alpha(3), beta(3), gamma(1), delta(1), epsilon(1). CF(0) has three main subunits: a(1), b(2) and c(9-12). The alpha and beta chains form an alternating ring which encloses part of the gamma chain. CF(1) is attached to CF(0) by a central stalk formed by the gamma and epsilon chains, while a peripheral stalk is formed by the delta and b chains.

The protein resides in the cell membrane. It catalyses the reaction ATP + H2O + 4 H(+)(in) = ADP + phosphate + 5 H(+)(out). Produces ATP from ADP in the presence of a proton gradient across the membrane. The catalytic sites are hosted primarily by the beta subunits. The polypeptide is ATP synthase subunit beta 2 (Mycoplasmopsis pulmonis (strain UAB CTIP) (Mycoplasma pulmonis)).